The following is a 235-amino-acid chain: Probable inactive serine protease 37 (235 aa).

A signal peptide spans 1–19; sequence MKYVFYLGVLAGTFFFADS. The 214-residue stretch at 20 to 233 folds into the Peptidase S1 domain; that stretch reads SVQKEDPAPY…YVSWIENTAK (214 aa). Intrachain disulfides connect Cys-40/Cys-56, Cys-131/Cys-198, and Cys-163/Cys-177.

This sequence belongs to the peptidase S1 family. In terms of tissue distribution, testis-specific. Expressed in spermatids (at protein level).

The protein resides in the cytoplasmic vesicle. It localises to the secretory vesicle. Its subcellular location is the acrosome. It is found in the secreted. Functionally, plays a role in male fertility. May have a role in sperm migration or binding to zona-intact eggs. Involved in the activation of the proacrosin/acrosin system. The chain is Probable inactive serine protease 37 from Homo sapiens (Human).